A 345-amino-acid chain; its full sequence is sn-glycerol-3-phosphate import ATP-binding protein UgpC (345 aa).

Residues 4–235 (IQLLNIKKQY…PKTIFVADFI (232 aa)) enclose the ABC transporter domain. 37 to 44 (GPSGCGKS) is a binding site for ATP.

Belongs to the ABC transporter superfamily. sn-glycerol-3-phosphate importer (TC 3.A.1.1.3) family. As to quaternary structure, the complex is composed of two ATP-binding proteins (UgpC), two transmembrane proteins (UgpA and UgpE) and a solute-binding protein (UgpB).

Its subcellular location is the cell inner membrane. It carries out the reaction sn-glycerol 3-phosphate(out) + ATP + H2O = sn-glycerol 3-phosphate(in) + ADP + phosphate + H(+). Functionally, part of the ABC transporter complex UgpBAEC involved in sn-glycerol-3-phosphate (G3P) import. Responsible for energy coupling to the transport system. This is sn-glycerol-3-phosphate import ATP-binding protein UgpC from Bartonella bacilliformis (strain ATCC 35685 / KC583 / Herrer 020/F12,63).